The sequence spans 333 residues: Ornithine carbamoyltransferase (333 aa).

Residues 56–59 (STRT), arginine 107, and 134–137 (HPTQ) contribute to the carbamoyl phosphate site. Residues asparagine 167, aspartate 231, and 235–236 (SM) each bind L-ornithine. Carbamoyl phosphate contacts are provided by residues 273–274 (CL) and arginine 318.

This sequence belongs to the aspartate/ornithine carbamoyltransferase superfamily. OTCase family.

Its subcellular location is the cytoplasm. It catalyses the reaction carbamoyl phosphate + L-ornithine = L-citrulline + phosphate + H(+). The protein operates within amino-acid degradation; L-arginine degradation via ADI pathway; carbamoyl phosphate from L-arginine: step 2/2. Functionally, reversibly catalyzes the transfer of the carbamoyl group from carbamoyl phosphate (CP) to the N(epsilon) atom of ornithine (ORN) to produce L-citrulline. This Clostridium botulinum (strain Kyoto / Type A2) protein is Ornithine carbamoyltransferase.